We begin with the raw amino-acid sequence, 129 residues long: Small ribosomal subunit protein uS11 (129 aa).

This sequence belongs to the universal ribosomal protein uS11 family. Part of the 30S ribosomal subunit. Interacts with proteins S7 and S18. Binds to IF-3.

Functionally, located on the platform of the 30S subunit, it bridges several disparate RNA helices of the 16S rRNA. Forms part of the Shine-Dalgarno cleft in the 70S ribosome. The protein is Small ribosomal subunit protein uS11 of Phocaeicola vulgatus (strain ATCC 8482 / DSM 1447 / JCM 5826 / CCUG 4940 / NBRC 14291 / NCTC 11154) (Bacteroides vulgatus).